Consider the following 222-residue polypeptide: Large ribosomal subunit protein mL64 (222 aa).

2 disordered regions span residues 21-47 and 186-222; these read RSRSYRAPPPPRRRPGPHSPDPENLLT and QRKRLKEERQRQKKEARIAAMASAEAQDSAVSGEPSS. Positions 98–207 form a coiled coil; sequence TMQESLRLQQ…KKEARIAAMA (110 aa). Positions 184-200 match the Nuclear localization signal motif; the sequence is KQQRKRLKEERQRQKKE. Basic and acidic residues predominate over residues 186 to 202; that stretch reads QRKRLKEERQRQKKEAR. Over residues 203–215 the composition is skewed to low complexity; that stretch reads IAAMASAEAQDSA.

Belongs to the mitochondrion-specific ribosomal protein mL64 family. As to quaternary structure, component of the mitochondrial ribosome large subunit (39S) which comprises a 16S rRNA and about 50 distinct proteins. Interacts with GADD45A, GADD45B and GADD45G. Interacts with NR4A1 via the NR4A1 AB domain. Interacts with ATAD3A and ATAD3B.

Its subcellular location is the mitochondrion. It localises to the nucleus. In terms of biological role, acts as a negative regulator of G1 to S cell cycle phase progression by inhibiting cyclin-dependent kinases. Inhibitory effects are additive with GADD45 proteins but also occur in the absence of GADD45 proteins. Acts as a repressor of the orphan nuclear receptor NR4A1 by inhibiting AB domain-mediated transcriptional activity. May be involved in the hormone-mediated regulation of NR4A1 transcriptional activity. May play a role in mitochondrial protein synthesis. This is Large ribosomal subunit protein mL64 (Gadd45gip1) from Mus musculus (Mouse).